The primary structure comprises 101 residues: Putative pterin-4-alpha-carbinolamine dehydratase (101 aa).

It belongs to the pterin-4-alpha-carbinolamine dehydratase family.

The catalysed reaction is (4aS,6R)-4a-hydroxy-L-erythro-5,6,7,8-tetrahydrobiopterin = (6R)-L-erythro-6,7-dihydrobiopterin + H2O. The chain is Putative pterin-4-alpha-carbinolamine dehydratase (phhB) from Ralstonia nicotianae (strain ATCC BAA-1114 / GMI1000) (Ralstonia solanacearum).